Reading from the N-terminus, the 440-residue chain is tRNA-2-methylthio-N(6)-dimethylallyladenosine synthase (440 aa).

Residues 5-121 (KKLYIKTYGC…LPEMEAKAGT (117 aa)) form the MTTase N-terminal domain. [4Fe-4S] cluster-binding residues include C14, C50, C84, C159, C163, and C166. The region spanning 145–378 (AKRGPTAFLT…LTRQQREVQD (234 aa)) is the Radical SAM core domain. Residues 378 to 440 (DSMVGRELGV…ANSLAGELID (63 aa)) form the TRAM domain.

This sequence belongs to the methylthiotransferase family. MiaB subfamily. In terms of assembly, monomer. The cofactor is [4Fe-4S] cluster.

The protein localises to the cytoplasm. The catalysed reaction is N(6)-dimethylallyladenosine(37) in tRNA + (sulfur carrier)-SH + AH2 + 2 S-adenosyl-L-methionine = 2-methylsulfanyl-N(6)-dimethylallyladenosine(37) in tRNA + (sulfur carrier)-H + 5'-deoxyadenosine + L-methionine + A + S-adenosyl-L-homocysteine + 2 H(+). Its function is as follows. Catalyzes the methylthiolation of N6-(dimethylallyl)adenosine (i(6)A), leading to the formation of 2-methylthio-N6-(dimethylallyl)adenosine (ms(2)i(6)A) at position 37 in tRNAs that read codons beginning with uridine. The polypeptide is tRNA-2-methylthio-N(6)-dimethylallyladenosine synthase (Ruegeria sp. (strain TM1040) (Silicibacter sp.)).